A 142-amino-acid polypeptide reads, in one-letter code: Large ribosomal subunit protein uL11 (142 aa).

The protein belongs to the universal ribosomal protein uL11 family. As to quaternary structure, part of the ribosomal stalk of the 50S ribosomal subunit. Interacts with L10 and the large rRNA to form the base of the stalk. L10 forms an elongated spine to which L12 dimers bind in a sequential fashion forming a multimeric L10(L12)X complex. One or more lysine residues are methylated.

In terms of biological role, forms part of the ribosomal stalk which helps the ribosome interact with GTP-bound translation factors. The chain is Large ribosomal subunit protein uL11 from Bartonella quintana (strain Toulouse) (Rochalimaea quintana).